The following is a 594-amino-acid chain: MENVTEGTWDSLPQKLNGSIRRTLEELKFTHMTPVQSATIPLFMNNKDIAAEAITGSGKTLAFVIPLLEILLKREEKLKKNQVGALIITPTRELAVQIDEVLSCFTKHFPQFSQILLIGGSNPVDDVRKFKEHGGNIIVATPGRLEDMFRRQADGLDLVICVKTLDVLILDEADRLLDMGFEASINTILGFLPKQRRTGLFSATQTQELENLVRAGLRNPVRIAVKEKGVAATSTQKTPIRLQNYYMICKADEKFNKLIAFLQKRKQEKHLVFFSTCACVEYYGKALEMLLKPVKVMCIHGKMKHKRNRIFTEFRKINSGILVCTDVMARGIDIHEVNWVVQYDPPSSASAFVHRCGRTARIGHHGSALVFLLPMEESYVSFLSINQKCPLQEMTELIISVDLLPKLKAMAETDRAVFEKGMKAFVSYVQAYAKHECNLIFRVKDLDFSSLARGFGLLRMPRMPELKGKNFSDFVSTLIDTDSIAYKDKNREKQRQKMLKERKEKLETEGRKHFAKNKAWSKQKARKEKKQKVALKRKKEEGSDIDEGDVDELLQDTRLLKRLKKGKITEEEFEKQLTAVGGKSEVEEGSEDSN.

Positions 9–37 (WDSLPQKLNGSIRRTLEELKFTHMTPVQS) match the Q motif motif. Residues 40–223 (IPLFMNNKDI…RAGLRNPVRI (184 aa)) enclose the Helicase ATP-binding domain. Residue 53 to 60 (AITGSGKT) participates in ATP binding. Residues 171–174 (DEAD) carry the DEAD box motif. Residues 254 to 411 (KFNKLIAFLQ…DLLPKLKAMA (158 aa)) form the Helicase C-terminal domain. Residues 486-542 (YKDKNREKQRQKMLKERKEKLETEGRKHFAKNKAWSKQKARKEKKQKVALKRKKEEG) are a coiled coil. Positions 502-512 (RKEKLETEGRK) are enriched in basic and acidic residues. The disordered stretch occupies residues 502 to 548 (RKEKLETEGRKHFAKNKAWSKQKARKEKKQKVALKRKKEEGSDIDEG). A compositionally biased stretch (basic residues) spans 513 to 537 (HFAKNKAWSKQKARKEKKQKVALKR). The interval 532–561 (KVALKRKKEEGSDIDEGDVDELLQDTRLLK) is important for nuclear localization.

This sequence belongs to the DEAD box helicase family. DDX55/SPB4 subfamily. In terms of assembly, interacts with 28S rRNA. Interacts with double-stranded RNA substrates in vitro; the interaction stimulates ATPase activity.

It localises to the nucleus. Its subcellular location is the nucleoplasm. The catalysed reaction is ATP + H2O = ADP + phosphate + H(+). Its function is as follows. Probable ATP-binding RNA helicase. Has ATPase activity and is involved in the maturation of precursor large subunit rRNAs. This Xenopus laevis (African clawed frog) protein is ATP-dependent RNA helicase DDX55 (ddx55).